The sequence spans 389 residues: GDSL esterase/lipase At1g28570 (389 aa).

Positions 1 to 25 (MATLFMKLVSFFLILSTFCLTTVNS) are cleaved as a signal peptide. S41 functions as the Nucleophile in the catalytic mechanism. Residues N137 and N319 are each glycosylated (N-linked (GlcNAc...) asparagine). Active-site residues include D344 and H347.

It belongs to the 'GDSL' lipolytic enzyme family.

It localises to the secreted. The protein is GDSL esterase/lipase At1g28570 of Arabidopsis thaliana (Mouse-ear cress).